The primary structure comprises 445 residues: tRNA-2-methylthio-N(6)-dimethylallyladenosine synthase (445 aa).

The MTTase N-terminal domain maps to K3 to R124. [4Fe-4S] cluster is bound by residues C12, C48, C87, C162, C166, and C169. Residues Y148–A380 form the Radical SAM core domain. The region spanning E383 to L445 is the TRAM domain.

Belongs to the methylthiotransferase family. MiaB subfamily. Monomer. [4Fe-4S] cluster serves as cofactor.

It localises to the cytoplasm. It carries out the reaction N(6)-dimethylallyladenosine(37) in tRNA + (sulfur carrier)-SH + AH2 + 2 S-adenosyl-L-methionine = 2-methylsulfanyl-N(6)-dimethylallyladenosine(37) in tRNA + (sulfur carrier)-H + 5'-deoxyadenosine + L-methionine + A + S-adenosyl-L-homocysteine + 2 H(+). Functionally, catalyzes the methylthiolation of N6-(dimethylallyl)adenosine (i(6)A), leading to the formation of 2-methylthio-N6-(dimethylallyl)adenosine (ms(2)i(6)A) at position 37 in tRNAs that read codons beginning with uridine. The sequence is that of tRNA-2-methylthio-N(6)-dimethylallyladenosine synthase from Rickettsia akari (strain Hartford).